A 1057-amino-acid chain; its full sequence is MTSTIPTPPSIPFLGHVASIEREVPLRSFRLLSEQYGEIYELNILGRKLLVVSSAKLMSDVSDDKNFYKNMSGPLLQVRNAVGDGLFTAYGEEPNWGIAHRLLMPAFGTASIRDMFPDMLDLASQLVLKWERFGPKHRIDPAEDFTRLTLDTIALCAMSYRLNSFYRDSSHPFVQSMVDFLVECNLRANRPGLLTSVMVQTNAKYEEDIKTMTELADEIIAERRRNPTDKKDLLNIMLYSKDPKTGQSLSDVNIRNNLLTFLIAGHEPTSGLLTFALYYLIKNPEAMRKAHEEVDEVLGDQQIQLTDIGKLKYIDAILRETMRLSPTAPMRTVRPFEDITIGDGKYFVPKDYTVVINTIVAQRDPTVWGEDSNEFHPERMLDGKFEALPPNAWQPFGFGMRACIGRPFAWQEAIIALAVLLQKFDFVLDDPSYELELKQSLTIKPAHFYVHALPREGKPQLLATPSAAPFSSHARETTNASLPASPGTEAKQPMYVLYGSNTGTSESFAQRIANGAAARGFRATLGTLDSVADHLPTDGPIVIVCASFEGEPADNAAHFVERLTSLQDKPLQNLRFAVFGCGHHDWFRTYQRIPKLIDQTLEDRGAQRLVPRGEGDAGSSEFFEAFEAWETKLWEVLPEEYNTVVKQDITSGLKVETVGEGATRAVDLRQHDAALGTVIENRVLTAPGAPQKRHIEFELPEGVTSRAGDYLAILPSNPPQDVHRVLARFGMLPEQQIVISSSGPSSLPTGRQISAFDLLSGYVELSQPATARDVRTLLNVESSDATKESLKALLESYSDAVLGRRLSILDLLEQYPDIKLLFAAYLALLPSMRTRQYSISSSPLWNAQRVTLTVSVLEAPALSGRKEPFLGVASTYLANLRPGDKVQMAVRASNAAFHLPQDPRTPLVLFAAGSGLAPMRGFLQERALQKKAGREVGRAVLFFGCRSPDEDYLYSDSDLKEWEELGVVELRPAFSRALEKSEGCKYVQDRVWHDRRALDGLYEAGAKWFVCGSGKVARGVKEVLTAMIKESRGYSDEEAAAAFERATVGRFATDIFE.

Cysteine 403 is a binding site for heme. A disordered region spans residues 465 to 488 (PSAAPFSSHARETTNASLPASPGT). The Flavodoxin-like domain occupies 494–634 (MYVLYGSNTG…AFEAWETKLW (141 aa)). FMN is bound by residues 500–504 (SNTGT) and 578–610 (VFGCGHHDWFRTYQRIPKLIDQTLEDRGAQRLV). The FAD-binding FR-type domain occupies 671 to 900 (HDAALGTVIE…RASNAAFHLP (230 aa)).

In the N-terminal section; belongs to the cytochrome P450 family. FAD is required as a cofactor. The cofactor is FMN. Heme serves as cofactor.

The enzyme catalyses 2 oxidized [cytochrome P450] + NADPH = 2 reduced [cytochrome P450] + NADP(+) + H(+). It catalyses the reaction an organic molecule + reduced [NADPH--hemoprotein reductase] + O2 = an alcohol + oxidized [NADPH--hemoprotein reductase] + H2O + H(+). The catalysed reaction is dodecan-1-ol + reduced [NADPH--hemoprotein reductase] + O2 = 1,5-dodecanediol + oxidized [NADPH--hemoprotein reductase] + H2O + H(+). It carries out the reaction dodecan-1-ol + reduced [NADPH--hemoprotein reductase] + O2 = 1,6-dodecanediol + oxidized [NADPH--hemoprotein reductase] + H2O + H(+). Its function is as follows. Self-sufficient cytochrome P450 monooxygenase that catalyzes the regioselective in-chain hydroxylation of fatty alcohols (C9-15) as well as fatty acids (C9-15) at the omega-1 to omega-7 or omega-1 to omega-6 positions, respectively. Is also able to convert naphthalene to 1-naphthol and 1-naphthol further to 1,3-dihydroxynaphthalene. This chain is Self-sufficient cytochrome P450 monooxygenase CYP505E3, found in Phanerodontia chrysosporium (White-rot fungus).